We begin with the raw amino-acid sequence, 360 residues long: Chorismate synthase (360 aa).

NADP(+)-binding residues include R48 and R54. FMN-binding positions include 125–127, 242–243, G283, 298–302, and R324; these read RSS, NG, and KPTSS.

This sequence belongs to the chorismate synthase family. In terms of assembly, homotetramer. It depends on FMNH2 as a cofactor.

It carries out the reaction 5-O-(1-carboxyvinyl)-3-phosphoshikimate = chorismate + phosphate. It functions in the pathway metabolic intermediate biosynthesis; chorismate biosynthesis; chorismate from D-erythrose 4-phosphate and phosphoenolpyruvate: step 7/7. Its function is as follows. Catalyzes the anti-1,4-elimination of the C-3 phosphate and the C-6 proR hydrogen from 5-enolpyruvylshikimate-3-phosphate (EPSP) to yield chorismate, which is the branch point compound that serves as the starting substrate for the three terminal pathways of aromatic amino acid biosynthesis. This reaction introduces a second double bond into the aromatic ring system. In Gluconobacter oxydans (strain 621H) (Gluconobacter suboxydans), this protein is Chorismate synthase.